The primary structure comprises 120 residues: C-C motif chemokine 23 (120 aa).

Residues 1 to 21 (MKVSVAALSCLMLVTALGSQA) form the signal peptide. Intrachain disulfides connect Cys54–Cys78, Cys55–Cys94, and Cys65–Cys105.

It belongs to the intercrine beta (chemokine CC) family. In terms of processing, the N-terminal is proteolytically cleaved by proteases associated with inflammatory responses. The processed forms, CCL23(19-99), CCL23(22-99), CCL23(27-99) and CCL23(30-99) exhibit increase in CCR1-mediated signaling and chemotaxis assays in vitro. As to expression, high levels in adult lung, liver, skeletal muscle and pancreas. Moderate levels in fetal liver, adult bone marrow and placenta. The short form is the major species and the longer form was detected only in very low abundance. CCL23(19-99), CCL23(22-99), CCL23(27-99), CCL23(30-99) are found in high levels in synovial fluids from rheumatoid patients.

Its subcellular location is the secreted. Shows chemotactic activity for monocytes, resting T-lymphocytes, and neutrophils, but not for activated lymphocytes. Inhibits proliferation of myeloid progenitor cells in colony formation assays. This protein can bind heparin. Binds CCR1. CCL23(19-99), CCL23(22-99), CCL23(27-99), CCL23(30-99) are more potent chemoattractants than CCL23. The protein is C-C motif chemokine 23 (CCL23) of Homo sapiens (Human).